Reading from the N-terminus, the 366-residue chain is Alanine racemase (366 aa).

Lys40 functions as the Proton acceptor; specific for D-alanine in the catalytic mechanism. Lys40 bears the N6-(pyridoxal phosphate)lysine mark. Substrate is bound at residue Arg136. Tyr263 functions as the Proton acceptor; specific for L-alanine in the catalytic mechanism. Residue Met310 participates in substrate binding.

Belongs to the alanine racemase family. Pyridoxal 5'-phosphate serves as cofactor.

The enzyme catalyses L-alanine = D-alanine. Its pathway is amino-acid biosynthesis; D-alanine biosynthesis; D-alanine from L-alanine: step 1/1. Its function is as follows. Catalyzes the interconversion of L-alanine and D-alanine. May also act on other amino acids. This is Alanine racemase (alr) from Streptococcus pyogenes serotype M5 (strain Manfredo).